Here is a 169-residue protein sequence, read N- to C-terminus: Peptide methionine sulfoxide reductase MsrA 1 (169 aa).

Cysteine 12 is an active-site residue.

It belongs to the MsrA Met sulfoxide reductase family.

It carries out the reaction L-methionyl-[protein] + [thioredoxin]-disulfide + H2O = L-methionyl-(S)-S-oxide-[protein] + [thioredoxin]-dithiol. It catalyses the reaction [thioredoxin]-disulfide + L-methionine + H2O = L-methionine (S)-S-oxide + [thioredoxin]-dithiol. Functionally, has an important function as a repair enzyme for proteins that have been inactivated by oxidation. Catalyzes the reversible oxidation-reduction of methionine sulfoxide in proteins to methionine. This Staphylococcus aureus (strain Mu50 / ATCC 700699) protein is Peptide methionine sulfoxide reductase MsrA 1 (msrA1).